The chain runs to 336 residues: Ankyrin repeat and SOCS box protein 1 (336 aa).

ANK repeat units lie at residues 37–69 (CDDT…RINE), 78–107 (LPCT…EVDL), 111–140 (KGQT…DPNG), 144–173 (HRST…DVDV), 192–221 (LVVC…NPDF), and 236–266 (SPGC…NLNL). Positions 287-336 (LQVFKEARSIPRTLLSLCRVAVRRALGKYRLHLVPSLPLPDPIKKFLLYE) constitute an SOCS box domain.

This sequence belongs to the ankyrin SOCS box (ASB) family. In terms of assembly, interacts with CUL5 and RNF7. Highest expression in testis, spleen, bone marrow and salivary gland.

It functions in the pathway protein modification; protein ubiquitination. Probable substrate-recognition component of a SCF-like ECS (Elongin-Cullin-SOCS-box protein) E3 ligase complex which mediates the ubiquitination and subsequent proteasomal degradation of target proteins. Mediates Notch-induced ubiquitination and degradation of TCF3/E2A and JAK2. May play a role in testis development. The sequence is that of Ankyrin repeat and SOCS box protein 1 (Asb1) from Mus musculus (Mouse).